The following is a 474-amino-acid chain: ATP synthase subunit beta (474 aa).

Residue 152 to 159 (GGAGVGKT) participates in ATP binding.

Belongs to the ATPase alpha/beta chains family. F-type ATPases have 2 components, CF(1) - the catalytic core - and CF(0) - the membrane proton channel. CF(1) has five subunits: alpha(3), beta(3), gamma(1), delta(1), epsilon(1). CF(0) has three main subunits: a(1), b(2) and c(9-12). The alpha and beta chains form an alternating ring which encloses part of the gamma chain. CF(1) is attached to CF(0) by a central stalk formed by the gamma and epsilon chains, while a peripheral stalk is formed by the delta and b chains.

It localises to the cell inner membrane. It carries out the reaction ATP + H2O + 4 H(+)(in) = ADP + phosphate + 5 H(+)(out). Its function is as follows. Produces ATP from ADP in the presence of a proton gradient across the membrane. The catalytic sites are hosted primarily by the beta subunits. This Paramagnetospirillum magneticum (strain ATCC 700264 / AMB-1) (Magnetospirillum magneticum) protein is ATP synthase subunit beta.